We begin with the raw amino-acid sequence, 122 residues long: Large ribosomal subunit protein uL18 (122 aa).

Belongs to the universal ribosomal protein uL18 family. In terms of assembly, part of the 50S ribosomal subunit; part of the 5S rRNA/L5/L18/L25 subcomplex. Contacts the 5S and 23S rRNAs.

Functionally, this is one of the proteins that bind and probably mediate the attachment of the 5S RNA into the large ribosomal subunit, where it forms part of the central protuberance. This chain is Large ribosomal subunit protein uL18, found in Hydrogenobaculum sp. (strain Y04AAS1).